Here is a 106-residue protein sequence, read N- to C-terminus: Glutaredoxin-1 (106 aa).

Alanine 2 is modified (N-acetylalanine). The 104-residue stretch at 3 to 106 folds into the Glutaredoxin domain; sequence QAFVNSKIQP…TRLQQIGALK (104 aa). Lysine 9 is subject to N6-succinyllysine. 2 disulfide bridges follow: cysteine 23–cysteine 26 and cysteine 79–cysteine 83.

The protein belongs to the glutaredoxin family.

The protein resides in the cytoplasm. Its function is as follows. Has a glutathione-disulfide oxidoreductase activity in the presence of NADPH and glutathione reductase. Reduces low molecular weight disulfides and proteins. This chain is Glutaredoxin-1 (GLRX), found in Sus scrofa (Pig).